Here is a 359-residue protein sequence, read N- to C-terminus: 3-dehydroquinate synthase (359 aa).

Residues 70–75 (DGEQYK), 105–109 (GVIGD), 129–130 (TT), K142, K151, and 169–172 (FYKT) each bind NAD(+). The Zn(2+) site is built by E184, H247, and H264.

It belongs to the sugar phosphate cyclases superfamily. Dehydroquinate synthase family. It depends on Co(2+) as a cofactor. Zn(2+) serves as cofactor. The cofactor is NAD(+).

It localises to the cytoplasm. It carries out the reaction 7-phospho-2-dehydro-3-deoxy-D-arabino-heptonate = 3-dehydroquinate + phosphate. It participates in metabolic intermediate biosynthesis; chorismate biosynthesis; chorismate from D-erythrose 4-phosphate and phosphoenolpyruvate: step 2/7. Catalyzes the conversion of 3-deoxy-D-arabino-heptulosonate 7-phosphate (DAHP) to dehydroquinate (DHQ). The sequence is that of 3-dehydroquinate synthase from Francisella tularensis subsp. tularensis (strain WY96-3418).